Reading from the N-terminus, the 154-residue chain is Large ribosomal subunit protein uL13 (154 aa).

Belongs to the universal ribosomal protein uL13 family. As to quaternary structure, part of the 50S ribosomal subunit.

In terms of biological role, this protein is one of the early assembly proteins of the 50S ribosomal subunit, although it is not seen to bind rRNA by itself. It is important during the early stages of 50S assembly. This Bartonella quintana (strain Toulouse) (Rochalimaea quintana) protein is Large ribosomal subunit protein uL13.